Consider the following 205-residue polypeptide: Myb-related protein 305 (205 aa).

HTH myb-type domains are found at residues 10-62 and 63-117; these read DVEV…LNYL and RPDV…QKHM. 2 consecutive DNA-binding regions (H-T-H motif) follow at residues 38 to 62 and 90 to 113; these read WNSL…LNYL and WSKI…RTRI.

As to expression, expressed only in flowers.

The protein resides in the nucleus. In terms of biological role, transcription factor. This chain is Myb-related protein 305, found in Antirrhinum majus (Garden snapdragon).